A 518-amino-acid chain; its full sequence is Arrestin-related trafficking adapter 10 (518 aa).

Lys118 is covalently cross-linked (Glycyl lysine isopeptide (Lys-Gly) (interchain with G-Cter in ubiquitin)).

It belongs to the ART10 family. Interacts with RSP5. Ubiquitinated by RSP5.

It localises to the cytoplasm. Functionally, may regulate endocytosis by recruiting RSP5 ubiquitin ligase activity to specific plasma membrane proteins in response to extracellular stimuli. This Saccharomyces cerevisiae (strain YJM789) (Baker's yeast) protein is Arrestin-related trafficking adapter 10 (ART10).